Reading from the N-terminus, the 137-residue chain is MGAHLVRRYLGDASVEPDPLQMPTFPPDYGFPERKEREMVATQQEMMDAQLRLQLRDYCAHYLIRLLKCKRDSFPNFXACKQERHDWDYCEHRDYVMRMKEFERERRLLQRKKRREKKAAELAKGQGPGEVDPKVAL.

Gly2 carries the N-myristoyl glycine lipid modification. The 43-residue stretch at 56-98 (RDYCAHYLIRLLKCKRDSFPNFXACKQERHDWDYCEHRDYVMR) folds into the CHCH domain. The short motif at 59–69 (CAHYLIRLLKC) is the Cx9C motif 1 element. Intrachain disulfides connect Cys59–Cys90 and Cys69–Cys80. Ser73 carries the phosphoserine modification. The short motif at 80–90 (CKQERHDWDYC) is the Cx9C motif 2 element. Positions 113 to 137 (KRREKKAAELAKGQGPGEVDPKVAL) are disordered.

Belongs to the complex I NDUFB7 subunit family. As to quaternary structure, complex I is composed of 45 different subunits.

The protein resides in the mitochondrion inner membrane. It is found in the mitochondrion intermembrane space. In terms of biological role, accessory subunit of the mitochondrial membrane respiratory chain NADH dehydrogenase (Complex I), that is believed not to be involved in catalysis. Complex I functions in the transfer of electrons from NADH to the respiratory chain. The immediate electron acceptor for the enzyme is believed to be ubiquinone. The chain is NADH dehydrogenase [ubiquinone] 1 beta subcomplex subunit 7 (NDUFB7) from Pan troglodytes (Chimpanzee).